A 579-amino-acid polypeptide reads, in one-letter code: CTP synthase 1 (579 aa).

Residues 305–559 (KIALVGKYTN…LGLVAASAGI (255 aa)) enclose the Glutamine amidotransferase type-1 domain. Catalysis depends on C404, which acts as the For GATase activity. Residue K422 forms a Glycyl lysine isopeptide (Lys-Gly) (interchain with G-Cter in ubiquitin) linkage. Residues H535 and E537 each act as for GATase activity in the active site.

This sequence belongs to the CTP synthase family. In terms of assembly, homodimer. Oligomerizes to a tetramer in the presence of its substrates UTP and ATP.

The enzyme catalyses UTP + L-glutamine + ATP + H2O = CTP + L-glutamate + ADP + phosphate + 2 H(+). The protein operates within pyrimidine metabolism; CTP biosynthesis via de novo pathway; CTP from UDP: step 2/2. Its activity is regulated as follows. Activated by GTP and inhibited by CTP. Its function is as follows. Catalyzes the ATP-dependent amination of UTP to CTP with either L-glutamine or ammonia as the source of nitrogen. The polypeptide is CTP synthase 1 (URA7) (Saccharomyces cerevisiae (strain ATCC 204508 / S288c) (Baker's yeast)).